The following is a 353-amino-acid chain: Protein AC18 (353 aa).

It is found in the host nucleus. The protein localises to the host cytoplasm. May play a role in occlusion-derived virions (ODV) formation and/or regulation of late viral gene expression. The polypeptide is Protein AC18 (DA41) (Autographa californica nuclear polyhedrosis virus (AcMNPV)).